Consider the following 39-residue polypeptide: Large ribosomal subunit protein bL36 (39 aa).

Belongs to the bacterial ribosomal protein bL36 family.

This chain is Large ribosomal subunit protein bL36, found in Lactiplantibacillus plantarum (strain ATCC BAA-793 / NCIMB 8826 / WCFS1) (Lactobacillus plantarum).